A 459-amino-acid polypeptide reads, in one-letter code: Putative flavin-containing monooxygenase 2 (459 aa).

Residues 17–21 (GAGVS), Glu38, and 46–47 (VW) each bind FAD. 217-220 (SAID) contributes to the NADP(+) binding site.

Belongs to the FMO family. Requires FAD as cofactor.

In Arabidopsis thaliana (Mouse-ear cress), this protein is Putative flavin-containing monooxygenase 2 (FMO2).